The chain runs to 264 residues: Mitochondrial distribution and morphology protein 12 (264 aa).

The region spanning 1-232 (MSFDINWNKI…WPSWINLDFN (232 aa)) is the SMP-LTD domain. A disordered region spans residues 240 to 264 (ESSSSAEESLPHRDDAQDFSADARA). Basic and acidic residues predominate over residues 248–264 (SLPHRDDAQDFSADARA).

Belongs to the MDM12 family. As to quaternary structure, component of the ER-mitochondria encounter structure (ERMES) or MDM complex, composed of MMM1, MDM10, MDM12 and MDM34. An MMM1 homodimer associates with one molecule of MDM12 on each side in a pairwise head-to-tail manner, and the SMP-LTD domains of MMM1 and MDM12 generate a continuous hydrophobic tunnel for phospholipid trafficking.

The protein localises to the mitochondrion outer membrane. It localises to the endoplasmic reticulum membrane. Its function is as follows. Component of the ERMES/MDM complex, which serves as a molecular tether to connect the endoplasmic reticulum (ER) and mitochondria. Components of this complex are involved in the control of mitochondrial shape and protein biogenesis, and function in nonvesicular lipid trafficking between the ER and mitochondria. MDM12 is required for the interaction of the ER-resident membrane protein MMM1 and the outer mitochondrial membrane-resident beta-barrel protein MDM10. The MDM12-MMM1 subcomplex functions in the major beta-barrel assembly pathway that is responsible for biogenesis of all mitochondrial outer membrane beta-barrel proteins, and acts in a late step after the SAM complex. The MDM10-MDM12-MMM1 subcomplex further acts in the TOM40-specific pathway after the action of the MDM12-MMM1 complex. Essential for establishing and maintaining the structure of mitochondria and maintenance of mtDNA nucleoids. This is Mitochondrial distribution and morphology protein 12 from Eremothecium gossypii (strain ATCC 10895 / CBS 109.51 / FGSC 9923 / NRRL Y-1056) (Yeast).